The primary structure comprises 240 residues: Phosphoribosylaminoimidazole-succinocarboxamide synthase (240 aa).

The protein belongs to the SAICAR synthetase family.

It catalyses the reaction 5-amino-1-(5-phospho-D-ribosyl)imidazole-4-carboxylate + L-aspartate + ATP = (2S)-2-[5-amino-1-(5-phospho-beta-D-ribosyl)imidazole-4-carboxamido]succinate + ADP + phosphate + 2 H(+). The protein operates within purine metabolism; IMP biosynthesis via de novo pathway; 5-amino-1-(5-phospho-D-ribosyl)imidazole-4-carboxamide from 5-amino-1-(5-phospho-D-ribosyl)imidazole-4-carboxylate: step 1/2. This Neorickettsia sennetsu (strain ATCC VR-367 / Miyayama) (Ehrlichia sennetsu) protein is Phosphoribosylaminoimidazole-succinocarboxamide synthase.